The following is a 125-amino-acid chain: Large ribosomal subunit protein bL12 (125 aa).

Belongs to the bacterial ribosomal protein bL12 family. Homodimer. Part of the ribosomal stalk of the 50S ribosomal subunit. Forms a multimeric L10(L12)X complex, where L10 forms an elongated spine to which 2 to 4 L12 dimers bind in a sequential fashion. Binds GTP-bound translation factors.

Forms part of the ribosomal stalk which helps the ribosome interact with GTP-bound translation factors. Is thus essential for accurate translation. The chain is Large ribosomal subunit protein bL12 from Granulibacter bethesdensis (strain ATCC BAA-1260 / CGDNIH1).